Reading from the N-terminus, the 314-residue chain is Homoserine O-succinyltransferase (314 aa).

The Acyl-thioester intermediate role is filled by cysteine 142. Substrate contacts are provided by lysine 163 and serine 192. Catalysis depends on histidine 235, which acts as the Proton acceptor. Glutamate 237 is a catalytic residue. Arginine 249 lines the substrate pocket.

It belongs to the MetA family.

Its subcellular location is the cytoplasm. It carries out the reaction L-homoserine + succinyl-CoA = O-succinyl-L-homoserine + CoA. It participates in amino-acid biosynthesis; L-methionine biosynthesis via de novo pathway; O-succinyl-L-homoserine from L-homoserine: step 1/1. In terms of biological role, transfers a succinyl group from succinyl-CoA to L-homoserine, forming succinyl-L-homoserine. This chain is Homoserine O-succinyltransferase, found in Shewanella woodyi (strain ATCC 51908 / MS32).